The sequence spans 261 residues: MIFVISPAKALDYETPPVTARFTTPDFLDDAAELIDILRTCTPADIAGLMSLSDKLASLNVARYATWSRPFAPDNAKQAILAFNGDVYEGLAATTLGEDGLAWAQDHLRILSGLYGVLRPLDLMQPYRLEMGTRLSNPRGKDLYAFWGERITTELNRLLDLERAAGREAVLVNLASEEYFKSVKPKLLKGRLVTPTFEDWKDGRYKIISFYAKRARGLMSRYAIERQLDEVEDLKAFDSDGYAFVAEASDEHSWVFRRRQD.

This sequence belongs to the UPF0246 family.

This is UPF0246 protein azo1887 from Azoarcus sp. (strain BH72).